The following is a 1612-amino-acid chain: Phospholipid-transporting ATPase DNF2 (1612 aa).

The segment at 1–74 (MSSPSKPTSP…MKDISTPDLS (74 aa)) is disordered. Over 1 to 252 (MSSPSKPTSP…TFFPKNILFQ (252 aa)) the chain is Cytoplasmic. The span at 20–30 (GSASNGLSSMS) shows a compositional bias: low complexity. Residue threonine 70 is modified to Phosphothreonine. Position 85 is a phosphoserine (serine 85). A helical transmembrane segment spans residues 253–273 (FHNFANIYFLILLILGAFQIF). The interval 272–279 (IFGVTNPG) is involved in phosphatidylcholine substrate selection. Topologically, residues 274–277 (GVTN) are extracellular. Residues 278-298 (PGFASVPLIVIVIITAIKDGI) traverse the membrane as a helical segment. Residues 299–598 (EDSRRTVLDL…RISRELNFSV (300 aa)) lie on the Cytoplasmic side of the membrane. The span at 364-373 (KLQKKREELR) shows a compositional bias: basic and acidic residues. The segment at 364 to 384 (KLQKKREELRRKRNSRSFGPR) is disordered. Residues serine 389, serine 392, serine 396, and serine 403 each carry the phosphoserine modification. Tyrosine 406 carries the post-translational modification Phosphotyrosine. A helical membrane pass occupies residues 599–619 (ILNFVLLFILCFTAGIVNGVY). Residues 620-639 (YKQKPRSRDYFEFGTIGGSA) lie on the Extracellular side of the membrane. The interval 631-635 (EFGTI) is involved in phosphatidylcholine substrate selection. A helical transmembrane segment spans residues 640-660 (STNGFVSFWVAVILYQSLVPI). Residues 661–1231 (SLYISVEIIK…WCYKRLAEMI (571 aa)) lie on the Cytoplasmic side of the membrane. Aspartate 712 (4-aspartylphosphate intermediate) is an active-site residue. Aspartate 712, lysine 713, and threonine 714 together coordinate ATP. Residue aspartate 712 participates in Mg(2+) binding. Threonine 714 is a Mg(2+) binding site. At threonine 782 the chain carries Phosphothreonine. ATP contacts are provided by glutamate 846, phenylalanine 887, serine 889, lysine 892, and lysine 916. Lysine 938 participates in a covalent cross-link: Glycyl lysine isopeptide (Lys-Gly) (interchain with G-Cter in ubiquitin). Positions 952, 953, 1032, 1033, 1034, 1147, and 1153 each coordinate ATP. Aspartate 1173 serves as a coordination point for Mg(2+). 2 residues coordinate ATP: asparagine 1176 and aspartate 1177. Aspartate 1177 contributes to the Mg(2+) binding site. The helical transmembrane segment at 1232–1252 (PQFFYKNVIFTLSLFWYGIYN) threads the bilayer. Topologically, residues 1253-1262 (NFDGSYLFEY) are extracellular. Residues 1263–1283 (TYLTFYNLAFTSVPVILLAVL) traverse the membrane as a helical segment. Residues 1284-1313 (DQDVSDTVSMLVPQLYRVGILRKEWNQTKF) lie on the Cytoplasmic side of the membrane. A helical membrane pass occupies residues 1314-1334 (LWYMLDGVYQSVICFFFPYLA). Residues 1335–1350 (YHKNMVVTENGLGLDH) lie on the Extracellular side of the membrane. The chain crosses the membrane as a helical span at residues 1351–1371 (RYFVGVFVTAIAVTSCNFYVF). Residues 1372 to 1377 (MEQYRW) are Cytoplasmic-facing. The helical transmembrane segment at 1378 to 1398 (DWFCGLFICLSLAVFYGWTGI) threads the bilayer. Over 1399–1418 (WTSSSSSNEFYKGAARVFAQ) the chain is Extracellular. A helical membrane pass occupies residues 1419-1439 (PAYWAVLFVGVLFCLLPRFTI). Position 1436 (arginine 1436) interacts with a 1,2-diacyl-sn-glycero-3-phospho-L-serine. At 1440–1612 (DCIRKIFYPK…TLLSQRSRDR (173 aa)) the chain is on the cytoplasmic side. Serine 1542 is modified (phosphoserine). Residues 1544–1563 (VTTTNNLPRRSMASARGNKL) are disordered. Phosphoserine is present on serine 1592.

The protein belongs to the cation transport ATPase (P-type) (TC 3.A.3) family. Type IV subfamily. As to quaternary structure, component of a flippase complex consisting of DNF1 and LEM3. Interacts with LEM3; the interaction is direct. The cofactor is Mg(2+). Post-translationally, phosphorylated by FPK1 and KIN82.

It is found in the cell membrane. The catalysed reaction is ATP + H2O + phospholipidSide 1 = ADP + phosphate + phospholipidSide 2.. It carries out the reaction a 1,2-diacyl-sn-glycero-3-phosphoethanolamine(out) + ATP + H2O = a 1,2-diacyl-sn-glycero-3-phosphoethanolamine(in) + ADP + phosphate + H(+). The enzyme catalyses a 1,2-diacyl-sn-glycero-3-phosphocholine(out) + ATP + H2O = a 1,2-diacyl-sn-glycero-3-phosphocholine(in) + ADP + phosphate + H(+). It catalyses the reaction a beta-D-glucosyl-(1&lt;-&gt;1')-N-acylsphing-4-enine(out) + ATP + H2O = a beta-D-glucosyl-(1&lt;-&gt;1')-N-acylsphing-4-enine(in) + ADP + phosphate + H(+). The catalysed reaction is a 1,2-diacyl-sn-glycero-3-phospho-L-serine(out) + ATP + H2O = a 1,2-diacyl-sn-glycero-3-phospho-L-serine(in) + ADP + phosphate + H(+). With respect to regulation, phosphatidylcholine flippase activity is inhibited by glucosylsphingosine, lactosylsphingosine, lysophosphatidylcholine and to a lesser degree sphingosine-1-phosphate and lysosphingomyelin. Glucosylceramide flippase activity is inhibited by lysophosphatidylcholine, glucosylsphingosine and to a lesser degree lactosylsphingosine whereas lysosphingomyelin has a stimulatory effect at low concentrations. In terms of biological role, catalytic component of a P4-ATPase flippase complex which catalyzes the hydrolysis of ATP coupled to the transport of glucosylceramide, phosphatidylcholine, phosphatidylethanolamine, and small amounts of phosphatidylserine from the lumenal to the cytosolic leaflet of the cell membrane and ensures the maintenance of asymmetric distribution of phospholipids. Does not appear to transport sphingomyelin, inositol phosphoceramide or phosphatidic acid. Required for efficient endocytosis. Required for protein transport from Golgi to vacuoles. The sequence is that of Phospholipid-transporting ATPase DNF2 (DNF2) from Saccharomyces cerevisiae (strain ATCC 204508 / S288c) (Baker's yeast).